The following is a 368-amino-acid chain: 7,8-didemethyl-8-hydroxy-5-deazariboflavin synthase (368 aa).

The 237-residue stretch at 36-272 (LSYCRNVFLP…EEVSVQVPPN (237 aa)) folds into the Radical SAM core domain. Residues cysteine 50, cysteine 54, and cysteine 57 each contribute to the [4Fe-4S] cluster site.

The protein belongs to the radical SAM superfamily. CofG family. In terms of assembly, consists of two subunits, CofG and CofH. [4Fe-4S] cluster serves as cofactor.

It carries out the reaction 5-amino-5-(4-hydroxybenzyl)-6-(D-ribitylimino)-5,6-dihydrouracil + S-adenosyl-L-methionine = 7,8-didemethyl-8-hydroxy-5-deazariboflavin + 5'-deoxyadenosine + L-methionine + NH4(+) + H(+). Its pathway is cofactor biosynthesis; coenzyme F0 biosynthesis. Its function is as follows. Catalyzes the radical-mediated synthesis of 7,8-didemethyl-8-hydroxy-5-deazariboflavin from 5-amino-5-(4-hydroxybenzyl)-6-(D-ribitylimino)-5,6-dihydrouracil. The protein is 7,8-didemethyl-8-hydroxy-5-deazariboflavin synthase of Haloarcula marismortui (strain ATCC 43049 / DSM 3752 / JCM 8966 / VKM B-1809) (Halobacterium marismortui).